The primary structure comprises 612 residues: uncharacterized protein (612 aa).

Residues 171 to 217 (MLPPSLVQRNNATTSPTTDSASENNESVPSLTSSVSTSSSVYSSWNP) are disordered. Over residues 177–196 (VQRNNATTSPTTDSASENNE) the composition is skewed to polar residues. The segment covering 197–214 (SVPSLTSSVSTSSSVYSS) has biased composition (low complexity).

The protein to yeast YNL018c.

This is an uncharacterized protein from Saccharomyces cerevisiae (strain ATCC 204508 / S288c) (Baker's yeast).